We begin with the raw amino-acid sequence, 274 residues long: Thiamine kinase (274 aa).

Belongs to the thiamine kinase family.

It carries out the reaction thiamine + ATP = thiamine phosphate + ADP + H(+). The protein operates within cofactor biosynthesis; thiamine diphosphate biosynthesis; thiamine phosphate from thiamine: step 1/1. Catalyzes the ATP-dependent phosphorylation of thiamine to thiamine phosphate. Is involved in thiamine salvage. The sequence is that of Thiamine kinase from Salmonella newport (strain SL254).